A 708-amino-acid chain; its full sequence is Polyribonucleotide nucleotidyltransferase (708 aa).

Mg(2+)-binding residues include Asp487 and Asp493. Residues 554 to 613 (PRIHTMKISADKIKDVIGKGGAVIRALTEETGTTIEIEDDGTIKIAATEGAAAKEAIRRI) enclose the KH domain. The region spanning 623 to 691 (GVIYTGKVAR…RQGRVRLSMK (69 aa)) is the S1 motif domain.

Belongs to the polyribonucleotide nucleotidyltransferase family. As to quaternary structure, component of the RNA degradosome, which is a multiprotein complex involved in RNA processing and mRNA degradation. It depends on Mg(2+) as a cofactor.

Its subcellular location is the cytoplasm. The enzyme catalyses RNA(n+1) + phosphate = RNA(n) + a ribonucleoside 5'-diphosphate. Involved in mRNA degradation. Catalyzes the phosphorolysis of single-stranded polyribonucleotides processively in the 3'- to 5'-direction. This is Polyribonucleotide nucleotidyltransferase from Vibrio vulnificus (strain CMCP6).